We begin with the raw amino-acid sequence, 163 residues long: Nucleotide-binding protein RBAM_011030 (163 aa).

The protein belongs to the YajQ family.

Functionally, nucleotide-binding protein. This is Nucleotide-binding protein RBAM_011030 from Bacillus velezensis (strain DSM 23117 / BGSC 10A6 / LMG 26770 / FZB42) (Bacillus amyloliquefaciens subsp. plantarum).